Consider the following 152-residue polypeptide: Large ribosomal subunit protein uL11 (152 aa).

This sequence belongs to the universal ribosomal protein uL11 family. Part of the ribosomal stalk of the 50S ribosomal subunit. Interacts with L10 and the large rRNA to form the base of the stalk. L10 forms an elongated spine to which L12 dimers bind in a sequential fashion forming a multimeric L10(L12)X complex. One or more lysine residues are methylated.

In terms of biological role, forms part of the ribosomal stalk which helps the ribosome interact with GTP-bound translation factors. The sequence is that of Large ribosomal subunit protein uL11 from Mycoplasmoides gallisepticum (strain R(low / passage 15 / clone 2)) (Mycoplasma gallisepticum).